The following is a 538-amino-acid chain: Syncytin-1 (538 aa).

A signal peptide spans Met1–Thr20. Residues Ala21 to Gln443 lie on the Extracellular side of the membrane. N-linked (GlcNAc...) asparagine glycosylation is present at Asn169. The CXXC motif lies at Cys186 to Cys189. Cystine bridges form between Cys186/Cys189, Cys186/Cys405, and Cys397/Cys404. Residues Asn208, Asn214, Asn234, Asn242, Asn245, and Asn281 are each glycosylated (N-linked (GlcNAc...) asparagine). Residues Ile320 to Ile340 form a fusion peptide region. The interval Leu380–Thr396 is immunosuppression. A CX6CC motif is present at residues Cys397–Cys405. Residue Asn409 is glycosylated (N-linked (GlcNAc...) asparagine). Residues Trp444 to Phe464 form a helical membrane-spanning segment. Positions Gly465–Lys484 are essential for the fusiogenic function. The Cytoplasmic portion of the chain corresponds to Gly465–Ser538. Positions Pro501 to Ser538 are disordered.

It belongs to the gamma type-C retroviral envelope protein family. HERV class-I W env subfamily. As to quaternary structure, the mature envelope protein (Env) consists of a trimer of SU-TM heterodimers attached probably by a labile interchain disulfide bond. Interacts with the C-type lectin CD209/DC-SIGN. In terms of processing, specific enzymatic cleavages in vivo yield mature proteins. Envelope glycoproteins are synthesized as an inactive precursor that is heavily N-glycosylated and processed likely by furin in the Golgi to yield the mature SU and TM proteins. The cleavage site between SU and TM requires the minimal sequence [KR]-X-[KR]-R. Post-translationally, the CXXC motif is highly conserved across a broad range of retroviral envelope proteins. It is thought to participate in the formation of a labile disulfide bond possibly with the CX6CC motif present in the transmembrane protein.

Its subcellular location is the cell membrane. It is found in the virion. Functionally, this endogenous retroviral envelope protein has retained its original fusogenic properties and participates in trophoblast fusion and the formation of a syncytium during placenta morphogenesis. May recognize and induce fusion through binding of SLC1A4 and SLC1A5. In terms of biological role, endogenous envelope proteins may have kept, lost or modified their original function during evolution. Retroviral envelope proteins mediate receptor recognition and membrane fusion during early infection. The surface protein (SU) mediates receptor recognition, while the transmembrane protein (TM) acts as a class I viral fusion protein. The protein may have at least 3 conformational states: pre-fusion native state, pre-hairpin intermediate state, and post-fusion hairpin state. During viral and target cell membrane fusion, the coiled coil regions (heptad repeats) assume a trimer-of-hairpins structure, positioning the fusion peptide in close proximity to the C-terminal region of the ectodomain. The formation of this structure appears to drive apposition and subsequent fusion of membranes. The protein is Syncytin-1 (ERVW-1) of Pongo pygmaeus (Bornean orangutan).